The primary structure comprises 117 residues: Iron-sulfur cluster insertion protein ErpA (117 aa).

Iron-sulfur cluster-binding residues include cysteine 45, cysteine 109, and cysteine 111.

The protein belongs to the HesB/IscA family. Homodimer. It depends on iron-sulfur cluster as a cofactor.

Its function is as follows. Required for insertion of 4Fe-4S clusters for at least IspG. In Chromohalobacter salexigens (strain ATCC BAA-138 / DSM 3043 / CIP 106854 / NCIMB 13768 / 1H11), this protein is Iron-sulfur cluster insertion protein ErpA.